Reading from the N-terminus, the 344-residue chain is Ferrochelatase (344 aa).

His-214 and Glu-295 together coordinate Fe cation.

The protein belongs to the ferrochelatase family.

The protein resides in the cytoplasm. It catalyses the reaction heme b + 2 H(+) = protoporphyrin IX + Fe(2+). The protein operates within porphyrin-containing compound metabolism; protoheme biosynthesis; protoheme from protoporphyrin-IX: step 1/1. Functionally, catalyzes the ferrous insertion into protoporphyrin IX. The protein is Ferrochelatase of Rhizobium etli (strain ATCC 51251 / DSM 11541 / JCM 21823 / NBRC 15573 / CFN 42).